The chain runs to 240 residues: Transcription factor bHLH101 (240 aa).

The 53-residue stretch at 65-117 (EKKLNHNASERDRRRKLNALYSSLRALLPLSDQKRKLSIPMTVARVVKYIPEQ) folds into the bHLH domain.

In terms of assembly, homodimer. Flowers.

The protein localises to the nucleus. The protein is Transcription factor bHLH101 (BHLH101) of Arabidopsis thaliana (Mouse-ear cress).